Here is a 308-residue protein sequence, read N- to C-terminus: tRNA pseudouridine synthase B (308 aa).

The active-site Nucleophile is the Asp51.

Belongs to the pseudouridine synthase TruB family. Type 1 subfamily.

It carries out the reaction uridine(55) in tRNA = pseudouridine(55) in tRNA. Responsible for synthesis of pseudouridine from uracil-55 in the psi GC loop of transfer RNAs. The sequence is that of tRNA pseudouridine synthase B from Aromatoleum aromaticum (strain DSM 19018 / LMG 30748 / EbN1) (Azoarcus sp. (strain EbN1)).